A 448-amino-acid polypeptide reads, in one-letter code: MSDLIQPKVLKGFRDFLPADEIERALLMERLVKVFRDYGFVPIDTPALEYSEILLRKSGGETEKQVFRFSDNGGRDVAMRFDLTVPLARFVAEHKSEIYFPFKRYHLGKVWRGEKPQAGRYREFLQCDFDTLGSDSAAVDFEILRLIKKALNELGVSNFKIHVSHRGIFNRFLKSLNLSEDSEEVLRIVDKLAKIGEDEVLKLLTDISSEESAKKILAYISGVSKELKSEDFEKTLSHLENLAGGPDEDTKRMRDIYALVKAVGIEDSIVFDPSITRGLDYYTGVVFETFLNDLPSIGSVCSGGRYDNLTALYMKECITGVGASIGLDRLLAALELLGHQKTKASFTDLLIFSLPEDDLVLSYKIVNFFEAEKINAEVYPEPKKMNHQYTYAEKKDIRWGLFLDKDSCVEEFDKAPQRFKIKLKDMTNRTEDETPLSEAVKKIRASKN.

The protein belongs to the class-II aminoacyl-tRNA synthetase family. In terms of assembly, homodimer.

Its subcellular location is the cytoplasm. It catalyses the reaction tRNA(His) + L-histidine + ATP = L-histidyl-tRNA(His) + AMP + diphosphate + H(+). The chain is Histidine--tRNA ligase from Treponema denticola (strain ATCC 35405 / DSM 14222 / CIP 103919 / JCM 8153 / KCTC 15104).